The primary structure comprises 220 residues: Sugar transporter SWEET1 (220 aa).

7 helical membrane-spanning segments follow: residues 9-29 (LMTF…IMPL), 44-64 (VAGL…SYAL), 70-90 (TMLF…FNYW), 106-126 (VMIA…NTVD), 138-158 (LSSV…AIVI), 167-187 (IINV…FGLL), and 191-211 (IYIY…LTLI). Positions 12–92 (FIQFCATFIT…IYYVFNYWKN (81 aa)) constitute a MtN3/slv 1 domain. Residues 134 to 217 (RLGFLSSVVC…LTLIKLYPPQ (84 aa)) form the MtN3/slv 2 domain.

Belongs to the SWEET sugar transporter family.

It is found in the golgi apparatus membrane. It localises to the cell membrane. In terms of biological role, mediates both low-affinity uptake and efflux of sugar across the membrane. The polypeptide is Sugar transporter SWEET1 (slc50a1) (Dictyostelium discoideum (Social amoeba)).